The chain runs to 876 residues: Nitrogen regulatory protein areA (876 aa).

Residues 1–11 are compositionally biased toward gly residues; sequence MSGLTLGGGSG. Disordered stretches follow at residues 1 to 65, 137 to 159, 192 to 248, 393 to 413, 451 to 498, and 573 to 672; these read MSGL…PTDS, QERERAQQQARASSQKSPVPGMS, IPFS…ESEF, FSPPPSGYQSTASTPQPAYDG, YMYN…PNEF, and SADM…GPTT. Composition is skewed to polar residues over residues 198–211, 399–408, and 455–480; these read DHPSPSTTKASEAT, GYQSTASTPQ, and QGGSSQDITQQNAHMGAQSSSMQSPG. Basic and acidic residues predominate over residues 602 to 611; that stretch reads VRNRDQDPRR. Over residues 615-640 the composition is skewed to polar residues; the sequence is ARTSSTPNTAQLLRQSMQNQSSHTSP. The segment at 673 to 697 adopts a GATA-type zinc-finger fold; that stretch reads CTNCFTQTTPLWRRNPEGQPLCNAC. The segment at residues 721–742 is a DNA-binding region (H-T-H motif); sequence NRNSANSLAVGSSRVSKKSARK. Composition is skewed to polar residues over residues 724–734 and 742–766; these read SANSLAVGSSR and KNSVQQVTPTAPTSSRAQSNTTSES. The tract at residues 724 to 856 is disordered; sequence SANSLAVGSS…MPPAAVNPAN (133 aa). Low complexity-rich tracts occupy residues 782–798 and 828–855; these read PIAAAPPKSSSAATTSP and SPSSTSSGGRSKVVPLAPAMPPAAVNPA.

As to quaternary structure, interacts with nmrA.

Its subcellular location is the nucleus. Functionally, transcription activator that binds the consensus DNA element 5'-CGATAG-3' and mediates nitrogen metabolite repression. Activates the transcription of uapA. In Emericella nidulans (strain FGSC A4 / ATCC 38163 / CBS 112.46 / NRRL 194 / M139) (Aspergillus nidulans), this protein is Nitrogen regulatory protein areA (areA).